A 280-amino-acid polypeptide reads, in one-letter code: Cytochrome c1 (280 aa).

An N-terminal signal peptide occupies residues 1-21 (MKKLLISAVSALVLGSGAALA). Heme c-binding residues include C55, C58, H59, and M205. Residues 249–267 (MGLVAVVMLGLLSVMLYLT) form a helical membrane-spanning segment.

The main subunits of complex b-c1 are: cytochrome b, cytochrome c1 and the Rieske protein. Post-translationally, binds 1 heme c group covalently per subunit.

It localises to the cell membrane. In terms of biological role, component of the ubiquinol-cytochrome c reductase complex (complex III or cytochrome b-c1 complex), which is a respiratory chain that generates an electrochemical potential coupled to ATP synthesis. c1 functions as an electron donor to cytochrome c. This is Cytochrome c1 (petC) from Rhodobacter capsulatus (Rhodopseudomonas capsulata).